Here is a 252-residue protein sequence, read N- to C-terminus: ATP-dependent L-serine kinase (252 aa).

E35 is an active-site residue. Position 73 (V73) interacts with O-phospho-L-serine. D74 provides a ligand contact to Mg(2+). 7 residues coordinate O-phospho-L-serine: G75, H76, H77, W107, K231, T233, and H235.

This sequence belongs to the SerK family. Monomer. The cofactor is Mg(2+).

The enzyme catalyses L-serine + ATP = O-phospho-L-serine + ADP + H(+). Free serine kinase that uses ATP to phosphorylate L-serine to yield O-phospho-L-serine and ADP. Can use ATP, UTP, CTP, GTP and the inorganic polyphosphates triphosphate and tetraphosphate as phosphate donors, with a preference for nucleoside 5'-triphosphates, but cannot use ADP. The catalytic efficiency is highest for ATP. Is specific for L-serine and cannot phosphorylate structurally similar compounds such as D-serine, L-threonine, L-homoserine, hydroxypyruvate, 3-hydroxypropionate and DL-glycerate. Likely contributes to serine metabolism, including cysteine biosynthesis. This chain is ATP-dependent L-serine kinase, found in Staphylothermus marinus (strain ATCC 43588 / DSM 3639 / JCM 9404 / F1).